The chain runs to 293 residues: Formamidopyrimidine-DNA glycosylase (293 aa).

Residue Pro-2 is the Schiff-base intermediate with DNA of the active site. Glu-3 acts as the Proton donor in catalysis. The Proton donor; for beta-elimination activity role is filled by Lys-58. DNA contacts are provided by His-104, Arg-123, and Lys-166. The segment at 257–293 (AVYDRESEPCRTKGCGGVVKRFVQNGRSTFCCPKCQK) adopts an FPG-type zinc-finger fold. Arg-283 functions as the Proton donor; for delta-elimination activity in the catalytic mechanism.

This sequence belongs to the FPG family. Monomer. Zn(2+) is required as a cofactor.

The enzyme catalyses Hydrolysis of DNA containing ring-opened 7-methylguanine residues, releasing 2,6-diamino-4-hydroxy-5-(N-methyl)formamidopyrimidine.. The catalysed reaction is 2'-deoxyribonucleotide-(2'-deoxyribose 5'-phosphate)-2'-deoxyribonucleotide-DNA = a 3'-end 2'-deoxyribonucleotide-(2,3-dehydro-2,3-deoxyribose 5'-phosphate)-DNA + a 5'-end 5'-phospho-2'-deoxyribonucleoside-DNA + H(+). Its function is as follows. Involved in base excision repair of DNA damaged by oxidation or by mutagenic agents. Acts as a DNA glycosylase that recognizes and removes damaged bases. Has a preference for oxidized purines, such as 7,8-dihydro-8-oxoguanine (8-oxoG). Has AP (apurinic/apyrimidinic) lyase activity and introduces nicks in the DNA strand. Cleaves the DNA backbone by beta-delta elimination to generate a single-strand break at the site of the removed base with both 3'- and 5'-phosphates. The chain is Formamidopyrimidine-DNA glycosylase from Rhodopseudomonas palustris (strain BisA53).